The chain runs to 395 residues: NAD(P)H-quinone oxidoreductase subunit H, chloroplastic (395 aa).

It belongs to the complex I 49 kDa subunit family. In terms of assembly, NDH is composed of at least 16 different subunits, 5 of which are encoded in the nucleus.

Its subcellular location is the plastid. The protein resides in the chloroplast thylakoid membrane. It carries out the reaction a plastoquinone + NADH + (n+1) H(+)(in) = a plastoquinol + NAD(+) + n H(+)(out). The catalysed reaction is a plastoquinone + NADPH + (n+1) H(+)(in) = a plastoquinol + NADP(+) + n H(+)(out). Its function is as follows. NDH shuttles electrons from NAD(P)H:plastoquinone, via FMN and iron-sulfur (Fe-S) centers, to quinones in the photosynthetic chain and possibly in a chloroplast respiratory chain. The immediate electron acceptor for the enzyme in this species is believed to be plastoquinone. Couples the redox reaction to proton translocation, and thus conserves the redox energy in a proton gradient. The sequence is that of NAD(P)H-quinone oxidoreductase subunit H, chloroplastic from Chloranthus spicatus (Chulantree).